Here is an 807-residue protein sequence, read N- to C-terminus: Putative histidine biosynthesis bifunctional protein HisCD (807 aa).

The histidinol dehydrogenase stretch occupies residues 1–440 (MTDHFDTLIR…ALNIAGQGVN (440 aa)). Zn(2+)-binding residues include Gln261 and His264. Active-site residues include Glu328 and His329. 2 residues coordinate Zn(2+): Asp362 and His421. Positions 441–807 (MNNIFDANLL…VNEQPKEIAN (367 aa)) are histidinol-phosphate aminotransferase. Residue Lys655 is modified to N6-(pyridoxal phosphate)lysine.

It in the N-terminal section; belongs to the histidinol dehydrogenase family. In the C-terminal section; belongs to the class-II pyridoxal-phosphate-dependent aminotransferase family. Histidinol-phosphate aminotransferase subfamily. In terms of assembly, homodimer. It depends on Zn(2+) as a cofactor. The cofactor is pyridoxal 5'-phosphate.

The catalysed reaction is L-histidinol phosphate + 2-oxoglutarate = 3-(imidazol-4-yl)-2-oxopropyl phosphate + L-glutamate. The enzyme catalyses L-histidinol + 2 NAD(+) + H2O = L-histidine + 2 NADH + 3 H(+). Its pathway is amino-acid biosynthesis; L-histidine biosynthesis; L-histidine from 5-phospho-alpha-D-ribose 1-diphosphate: step 7/9. It functions in the pathway amino-acid biosynthesis; L-histidine biosynthesis; L-histidine from 5-phospho-alpha-D-ribose 1-diphosphate: step 9/9. In terms of biological role, catalyzes the sequential NAD-dependent oxidations of L-histidinol to L-histidinaldehyde and then to L-histidine. This Photorhabdus laumondii subsp. laumondii (strain DSM 15139 / CIP 105565 / TT01) (Photorhabdus luminescens subsp. laumondii) protein is Putative histidine biosynthesis bifunctional protein HisCD (hisCD).